Here is a 233-residue protein sequence, read N- to C-terminus: Protein-L-isoaspartate O-methyltransferase (233 aa).

The active site involves S83.

It belongs to the methyltransferase superfamily. L-isoaspartyl/D-aspartyl protein methyltransferase family.

The protein resides in the cytoplasm. It catalyses the reaction [protein]-L-isoaspartate + S-adenosyl-L-methionine = [protein]-L-isoaspartate alpha-methyl ester + S-adenosyl-L-homocysteine. Functionally, catalyzes the methyl esterification of L-isoaspartyl residues in peptides and proteins that result from spontaneous decomposition of normal L-aspartyl and L-asparaginyl residues. It plays a role in the repair and/or degradation of damaged proteins. This chain is Protein-L-isoaspartate O-methyltransferase, found in Opitutus terrae (strain DSM 11246 / JCM 15787 / PB90-1).